Reading from the N-terminus, the 264-residue chain is COP9 signalosome complex subunit 7b (264 aa).

Ala-2 bears the N-acetylalanine mark. Positions 2–159 (AGEQKPSSNL…QLLEVDFCIG (158 aa)) constitute a PCI domain. Positions 188 to 237 (IEQQVLRANQYKENHNRTQQQVEAEVTNIKKTLKATASSSAQEMEQQLAE) form a coiled coil. The span at 223-232 (TASSSAQEME) shows a compositional bias: polar residues. A disordered region spans residues 223–264 (TASSSAQEMEQQLAERECPPHAEQRQPTKKMSKVKGLVSSRH). Over residues 235–248 (LAERECPPHAEQRQ) the composition is skewed to basic and acidic residues. Ser-261 bears the Phosphothreonine mark. Arg-263 is subject to Phosphoserine.

This sequence belongs to the CSN7/EIF3M family. CSN7 subfamily. Component of the CSN complex, composed of COPS1/GPS1, COPS2, COPS3, COPS4, COPS5, COPS6, COPS7 (COPS7A or COPS7B), COPS8 and COPS9 isoform 1. In the complex, it probably interacts directly with COPS1, COPS2, COPS4, COPS5, COPS6 and COPS8. Interacts with EIF3S6. As to quaternary structure, (Microbial infection) Interacts with vaccinia virus protein C9L.

It localises to the cytoplasm. Its subcellular location is the nucleus. In terms of biological role, component of the COP9 signalosome complex (CSN), a complex involved in various cellular and developmental processes. The CSN complex is an essential regulator of the ubiquitin (Ubl) conjugation pathway by mediating the deneddylation of the cullin subunits of SCF-type E3 ligase complexes, leading to decrease the Ubl ligase activity of SCF-type complexes such as SCF, CSA or DDB2. The complex is also involved in phosphorylation of p53/TP53, JUN, I-kappa-B-alpha/NFKBIA, ITPK1 and IRF8/ICSBP, possibly via its association with CK2 and PKD kinases. CSN-dependent phosphorylation of TP53 and JUN promotes and protects degradation by the Ubl system, respectively. The chain is COP9 signalosome complex subunit 7b (COPS7B) from Homo sapiens (Human).